The chain runs to 346 residues: [LysW]-lysine/[LysW]-ornithine hydrolase (346 aa).

His-67 is a Zn(2+) binding site. The active site involves Asp-69. Zn(2+) is bound at residue Asp-91. The Proton acceptor role is filled by Glu-121. 3 residues coordinate Zn(2+): Glu-122, Glu-145, and His-316.

It belongs to the peptidase M20A family. LysK subfamily. Requires Zn(2+) as cofactor. Co(2+) is required as a cofactor.

The protein localises to the cytoplasm. It catalyses the reaction [amino-group carrier protein]-C-terminal-gamma-(L-lysyl)-L-glutamate + H2O = [amino-group carrier protein]-C-terminal-L-glutamate + L-lysine. The catalysed reaction is [amino-group carrier protein]-C-terminal-gamma-(L-ornithyl)-L-glutamate + H2O = [amino-group carrier protein]-C-terminal-L-glutamate + L-ornithine. Its pathway is amino-acid biosynthesis; L-lysine biosynthesis via AAA pathway; L-lysine from L-alpha-aminoadipate (Thermus route): step 5/5. It functions in the pathway amino-acid biosynthesis; L-arginine biosynthesis. In terms of biological role, catalyzes the release of L-lysine from [LysW]-gamma-L-lysine and the release of L-ornithine from [LysW]-L-ornithine. This Sulfurisphaera tokodaii (strain DSM 16993 / JCM 10545 / NBRC 100140 / 7) (Sulfolobus tokodaii) protein is [LysW]-lysine/[LysW]-ornithine hydrolase.